Consider the following 190-residue polypeptide: PBP1-interacting protein LSM12 (190 aa).

In terms of domain architecture, Sm spans 2 to 69 (PVCNNDSQLI…IKEVTALRDN (68 aa)). Residues 84–190 (PSMQAARDRS…ERVQKTLSKK (107 aa)) form the AD domain.

This sequence belongs to the LSM12 family. In terms of assembly, forms a complex composed of at least MKT1, PBP1, XAC1 and LSM12. Forms a complex composed of at least MKT1L, PBP1, XAC1 and LSM12. Within the complex, interacts with PBP1; the interaction is direct.

Involved in post-transcriptional regulation of gene expression. The chain is PBP1-interacting protein LSM12 from Trypanosoma brucei brucei (strain 927/4 GUTat10.1).